We begin with the raw amino-acid sequence, 173 residues long: RNA polymerase sigma factor TcsR (173 aa).

The sigma-70 factor domain-4 stretch occupies residues 122–169 (IKDLTQNEKNIIRKIYLDRLRESEISRELNISRQAVNKTHLRALEKLK). The segment at residues 143 to 162 (ESEISRELNISRQAVNKTHL) is a DNA-binding region (H-T-H motif).

Belongs to the sigma-70 factor family.

Its function is as follows. Sigma factors are initiation factors that promote the attachment of RNA polymerase to specific initiation sites and are then released. Transcriptional regulator specifically required to activate expression of the toxin gene locus, composed of tcsL, tcsH and tcdE/utxA. This chain is RNA polymerase sigma factor TcsR, found in Paraclostridium sordellii (Clostridium sordellii).